We begin with the raw amino-acid sequence, 75 residues long: MNRFVIICLLFTYYVIWSLLPIFEIENSNPVVSLLFPISSNVAIFLPIFLLLIGFTLTGSVLGVLLIRSDKKKKV.

A run of 2 helical transmembrane segments spans residues 5-25 (VIIC…IFEI) and 42-62 (VAIF…GSVL).

The protein localises to the membrane. This is an uncharacterized protein from Saccharomyces cerevisiae (strain ATCC 204508 / S288c) (Baker's yeast).